The sequence spans 267 residues: Hemin import ATP-binding protein HmuV (267 aa).

Residues 3-243 (LEVRGIEVWR…ELVARVFGLR (241 aa)) enclose the ABC transporter domain. 35 to 42 (GPNGAGKS) is a binding site for ATP.

The protein belongs to the ABC transporter superfamily. Heme (hemin) importer (TC 3.A.1.14.5) family. In terms of assembly, the complex is composed of two ATP-binding proteins (HmuV), two transmembrane proteins (HmuU) and a solute-binding protein (HmuT).

It localises to the cell inner membrane. In terms of biological role, part of the ABC transporter complex HmuTUV involved in hemin import. Responsible for energy coupling to the transport system. The protein is Hemin import ATP-binding protein HmuV of Myxococcus xanthus (strain DK1622).